The primary structure comprises 218 residues: Glutathione S-transferase Mu 1 (218 aa).

The GST N-terminal domain occupies 2–88; the sequence is PMTLGYWDIR…YIARKHNLCG (87 aa). 7-8 is a glutathione binding site; it reads YW. Thr-34 is subject to Phosphothreonine. Glutathione is bound by residues 43–46, Lys-50, 59–60, and 72–73; these read RSQW, NL, and QS. Positions 90-208 constitute a GST C-terminal domain; it reads TEEEKIRVDI…KSSRFLPKPL (119 aa). Substrate is bound at residue Tyr-116.

Belongs to the GST superfamily. Mu family. Homodimer.

It is found in the cytoplasm. It catalyses the reaction RX + glutathione = an S-substituted glutathione + a halide anion + H(+). The catalysed reaction is prostaglandin A2 + glutathione = prostaglandin A2-S-(R)-glutathione. The enzyme catalyses prostaglandin J2 + glutathione = prostaglandin J2-S-(R)-glutathione. It carries out the reaction prostaglandin J2 + glutathione = prostaglandin J2-S-(S)-glutathione. It catalyses the reaction prostaglandin A2 + glutathione = prostaglandin A2-S-(S)-glutathione. The catalysed reaction is 11(S)-hydroxy-14(S),15(S)-epoxy-(5Z,8Z,12E)-eicosatrienoate + glutathione = (11S,15S)-dihydroxy-14(R)-S-glutathionyl-(5Z,8Z,12E)-eicosatrienoate. In terms of biological role, conjugation of reduced glutathione to a wide number of exogenous and endogenous hydrophobic electrophiles. Involved in the formation of glutathione conjugates of both prostaglandin A2 (PGA2) and prostaglandin J2 (PGJ2). Participates in the formation of novel hepoxilin regioisomers. In Macaca fascicularis (Crab-eating macaque), this protein is Glutathione S-transferase Mu 1 (GSTM1).